The sequence spans 564 residues: Phosphomethylpyrimidine synthase (564 aa).

Residues Asn203, Met232, Tyr261, His297, 317–319 (SRG), 358–361 (DGLR), and Glu397 each bind substrate. His401 is a binding site for Zn(2+). Tyr424 contacts substrate. His465 contributes to the Zn(2+) binding site. [4Fe-4S] cluster is bound by residues Cys541, Cys544, and Cys549.

Belongs to the ThiC family. It depends on [4Fe-4S] cluster as a cofactor.

The enzyme catalyses 5-amino-1-(5-phospho-beta-D-ribosyl)imidazole + S-adenosyl-L-methionine = 4-amino-2-methyl-5-(phosphooxymethyl)pyrimidine + CO + 5'-deoxyadenosine + formate + L-methionine + 3 H(+). It participates in cofactor biosynthesis; thiamine diphosphate biosynthesis. Catalyzes the synthesis of the hydroxymethylpyrimidine phosphate (HMP-P) moiety of thiamine from aminoimidazole ribotide (AIR) in a radical S-adenosyl-L-methionine (SAM)-dependent reaction. This chain is Phosphomethylpyrimidine synthase, found in Bacteroides fragilis (strain ATCC 25285 / DSM 2151 / CCUG 4856 / JCM 11019 / LMG 10263 / NCTC 9343 / Onslow / VPI 2553 / EN-2).